The sequence spans 134 residues: Small ribosomal subunit protein uS11 (134 aa).

Positions 1-22 are disordered; the sequence is MAQKTRATAARKPRRKVNKNVT. The segment covering 9–18 has biased composition (basic residues); the sequence is AARKPRRKVN.

The protein belongs to the universal ribosomal protein uS11 family. Part of the 30S ribosomal subunit. Interacts with proteins S7 and S18. Binds to IF-3.

Located on the platform of the 30S subunit, it bridges several disparate RNA helices of the 16S rRNA. Forms part of the Shine-Dalgarno cleft in the 70S ribosome. This is Small ribosomal subunit protein uS11 from Kocuria rhizophila (strain ATCC 9341 / DSM 348 / NBRC 103217 / DC2201).